The sequence spans 874 residues: Protein Son (874 aa).

Disordered stretches follow at residues 1–45 (MTEN…ERPD), 68–98 (RRSNSNELGNNDESGESESSASADDKKNIKP), and 120–368 (ELLD…SRDL). Polar residues predominate over residues 12-24 (ETPQVAGSQTNPP). Residues 70 to 89 (SNSNELGNNDESGESESSAS) show a composition bias toward low complexity. Composition is skewed to basic residues over residues 128–147 (KKKKKVKKEKKDKKAKKKKT) and 162–175 (KHKHKRKKHKHKDI). Composition is skewed to basic and acidic residues over residues 176–219 (RVKD…KDKF) and 226–277 (SEKE…ERVR). Residues 705–751 (TGGMGMALLQKMGWKPGEGLGRCKTGSLQPLLLDVKLDKRGLVSRDD) enclose the G-patch domain. The DRBM domain occupies 800–870 (HPVCVLNELT…AALCLRSLGI (71 aa)).

Expressed in ovarian nurse cells (at protein level).

It localises to the nucleus. Its function is as follows. RNA-binding protein that protects nascent transcripts containing intronic transposable sequences, known as INE-1, from being degraded by DIP1. Modulates DIP1 activity by repressing its sumoylation levels. This ensures that intronic sequences will be degradated only after splicing. In the ovaries, regulates germline stem cells (GSCs) self-renewal by repressing the expression of the GSC differentiation-promoting factor Rga. The chain is Protein Son from Drosophila melanogaster (Fruit fly).